A 147-amino-acid polypeptide reads, in one-letter code: Hemoglobin subunit beta (147 aa).

V2 is modified (N-acetylvaline). In terms of domain architecture, Globin spans 3–147 (HLTGEEKGIV…VATALAHKYH (145 aa)). A Phosphothreonine modification is found at T13. S45 bears the Phosphoserine mark. K60 is subject to N6-acetyllysine. A heme b-binding site is contributed by H64. K83 is modified (N6-acetyllysine). Residue H93 participates in heme b binding. Residue C94 is modified to S-nitrosocysteine. N6-acetyllysine is present on K145.

This sequence belongs to the globin family. In terms of assembly, heterotetramer of two alpha chains and two beta chains. Red blood cells.

Involved in oxygen transport from the lung to the various peripheral tissues. This chain is Hemoglobin subunit beta (HBB), found in Rhinolophus ferrumequinum (Greater horseshoe bat).